The sequence spans 570 residues: Hemagglutinin-neuraminidase (570 aa).

Residues methionine 1–arginine 26 are Intravirion-facing. The helical transmembrane segment at isoleucine 27–methionine 48 threads the bilayer. Residues glutamate 49–valine 570 are Virion surface-facing. Asparagine 119 carries an N-linked (GlcNAc...) asparagine; by host glycan. Positions glycine 124 to tyrosine 152 are important for interaction with fusion/F protein. 3 disulfides stabilise this stretch: cysteine 172–cysteine 195, cysteine 185–cysteine 246, and cysteine 237–cysteine 250. Positions asparagine 233–serine 238 are involved in neuraminidase activity. Asparagine 340 and asparagine 432 each carry an N-linked (GlcNAc...) asparagine; by host glycan. Cystine bridges form between cysteine 343/cysteine 460 and cysteine 454/cysteine 464. 3 N-linked (GlcNAc...) asparagine; by host glycosylation sites follow: asparagine 480, asparagine 507, and asparagine 537. Cysteine 530 and cysteine 541 are joined by a disulfide.

Belongs to the paramyxoviruses hemagglutinin-neuraminidase family. In terms of assembly, homotetramer; composed of disulfide-linked homodimers. Interacts with F protein trimer. Interacts with host CG-1B; this interaction inhibits viral adsorption and replication rather than internalization.

It localises to the virion membrane. The protein localises to the host cell membrane. It carries out the reaction Hydrolysis of alpha-(2-&gt;3)-, alpha-(2-&gt;6)-, alpha-(2-&gt;8)- glycosidic linkages of terminal sialic acid residues in oligosaccharides, glycoproteins, glycolipids, colominic acid and synthetic substrates.. Its function is as follows. Mediates the viral entry into the host cell together with fusion/F protein. Attaches the virus to sialic acid-containing cell receptors and thereby initiates infection. Binding of HN protein to the receptor induces a conformational change that allows the F protein to trigger virion/cell membranes fusion. Neuraminidase activity ensures the efficient spread of the virus by dissociating the mature virions from the neuraminic acid containing glycoproteins. This Gallus gallus (Chicken) protein is Hemagglutinin-neuraminidase (HN).